Consider the following 242-residue polypeptide: Caffeoyl-CoA O-methyltransferase 3 (242 aa).

Lys-16 provides a ligand contact to substrate. Residues Thr-58, Glu-80, 82 to 83 (GV), Ser-88, Asp-106, and Ala-135 each bind S-adenosyl-L-methionine. Asp-158 is a substrate binding site. Asp-158 lines the a divalent metal cation pocket. Asp-160 serves as a coordination point for S-adenosyl-L-methionine. The a divalent metal cation site is built by Asp-184 and Asn-185. Asn-189 contacts substrate.

Belongs to the class I-like SAM-binding methyltransferase superfamily. Cation-dependent O-methyltransferase family. CCoAMT subfamily. It depends on Mg(2+) as a cofactor. Mostly expressed in the bottom and middle parts of the stems.

The catalysed reaction is (E)-caffeoyl-CoA + S-adenosyl-L-methionine = (E)-feruloyl-CoA + S-adenosyl-L-homocysteine + H(+). Its pathway is aromatic compound metabolism; phenylpropanoid biosynthesis. Its function is as follows. Methylates caffeoyl-CoA to feruloyl-CoA and 5-hydroxyferuloyl-CoA to sinapoyl-CoA. Plays a role in the synthesis of feruloylated polysaccharides. Involved in the reinforcement of the plant cell wall. Also involved in the responding to wounding or pathogen challenge by the increased formation of cell wall-bound ferulic acid polymers. Also methylates free caffeic and 5-hydroxyferulic acids. The protein is Caffeoyl-CoA O-methyltransferase 3 (CCOAOMT3) of Nicotiana tabacum (Common tobacco).